The sequence spans 449 residues: Pentalenene oxygenase (449 aa).

A helical transmembrane segment spans residues 251 to 273 (VITVMAAGTETVAGTLTWIFHLL). Cysteine 393 serves as a coordination point for heme.

The protein belongs to the cytochrome P450 family.

It is found in the membrane. It carries out the reaction pentalenene + 4 reduced [2Fe-2S]-[ferredoxin] + 2 O2 + 4 H(+) = pentalen-13-al + 4 oxidized [2Fe-2S]-[ferredoxin] + 3 H2O. It participates in antibiotic biosynthesis; neopentalenolactone biosynthesis. Functionally, catalyzes the conversion of pentalenene to pentalen-13-al by stepwise oxidation via pentalen-13-ol, a precursor of neopentalenolactone antibiotic. This Streptomyces avermitilis (strain ATCC 31267 / DSM 46492 / JCM 5070 / NBRC 14893 / NCIMB 12804 / NRRL 8165 / MA-4680) protein is Pentalenene oxygenase (ptlI).